Here is a 674-residue protein sequence, read N- to C-terminus: MHLQISLLLLFCLNIVHGSDGYFSERYQKQSSIKGPPHFLPFNVKSQGVQMRGEQGPPGPPGPIGPRGQPGPAGKPGFGSPGPQGPPGPLGPPGFSTVGKLGMPGLPGKPGERGLNGEKGEAGPVGLPGARGPQGPPGIPGPAGLSVLGKPGPQGPPGAQGPRGPPGEKGEPGVPGINGQKGEMGFGVPGRPGNRGLPGPQGPQGLPGSAGIGKPGENGLPGQPGMKGDRGLPGARGEAGIPGPQGPPGEPGEVGIGKPGPMGPPGPAGIPGAKGLPGPAGLPGSPGLPGFGKPGLPGMKGHRGPEGPPGFPGPKGDQGPAGVPGELGPAGPQGNMGPQGLKGLPGENGLPGPKGDMGPVGPAGFPGAKGERGLPGLDGKPGYPGEQGLPGPKGHPGLPGQKGDTGHAGHPGLPGPVGPQGVKGVPGINGEPGPRGPSGIPGVRGPIGPPGMPGAPGAKGEAGAPGLPGPAGIVTKGLRGPMGPLGPPGPKGNSGEPGLPGPPGPPGPPGQSTIPEGYVKGESRELSGMSFMKAGANQALTGMPVSAFTVILSKAYPGATVPIKFDKILYNRQQHYDPRTGIFTCRIPGLYYFSYHVHAKGTNVWVALYKNGSPVMYTYDEYQKGYLDQASGSAVIDLMENDQVWLQLPNSESNGLYSSEYVHSSFSGFLFAQI.

A signal peptide spans 1-18 (MHLQISLLLLFCLNIVHG). The interval 19–52 (SDGYFSERYQKQSSIKGPPHFLPFNVKSQGVQMR) is nonhelical region (NC2). The disordered stretch occupies residues 49 to 517 (VQMRGEQGPP…PPGQSTIPEG (469 aa)). The triple-helical region stretch occupies residues 53-512 (GEQGPPGPPG…PGPPGPPGQS (460 aa)). A compositionally biased stretch (pro residues) spans 83–92 (PQGPPGPLGP). Positions 110–121 (PGERGLNGEKGE) are enriched in basic and acidic residues. Composition is skewed to low complexity over residues 191 to 207 (RPGN…QGLP), 270 to 285 (IPGA…LPGS), 387 to 402 (QGLP…PGQK), and 437 to 446 (PSGIPGVRGP). A hydroxyproline mark is found at Pro-453 and Pro-456. The segment covering 455-482 (APGAKGEAGAPGLPGPAGIVTKGLRGPM) has biased composition (low complexity). Pro residues predominate over residues 499–509 (LPGPPGPPGPP). Residues 513–674 (TIPEGYVKGE…SFSGFLFAQI (162 aa)) form a nonhelical region (NC1) region. The 134-residue stretch at 541-674 (TGMPVSAFTV…SFSGFLFAQI (134 aa)) folds into the C1q domain. Ca(2+)-binding residues include Asp-620, Glu-621, Leu-627, and Asp-628.

Homotrimer. Prolines at the third position of the tripeptide repeating unit (G-X-Y) are hydroxylated in some or all of the chains.

The protein localises to the secreted. The protein resides in the extracellular space. It is found in the extracellular matrix. Type X collagen is a product of hypertrophic chondrocytes and has been localized to presumptive mineralization zones of hyaline cartilage. This chain is Collagen alpha-1(X) chain (COL10A1), found in Gallus gallus (Chicken).